The chain runs to 379 residues: 2-methylcitrate synthase (379 aa).

His-187 contributes to the substrate binding site. Residue His-222 is part of the active site. 264–268 (KVMGF) lines the CoA pocket. The active site involves His-270. Arg-279 is a substrate binding site. Asp-321 is an active-site residue. Arg-346 and Arg-365 together coordinate substrate.

It belongs to the citrate synthase family. Homodimer.

The enzyme catalyses propanoyl-CoA + oxaloacetate + H2O = (2S,3S)-2-methylcitrate + CoA + H(+). It catalyses the reaction oxaloacetate + acetyl-CoA + H2O = citrate + CoA + H(+). Its pathway is organic acid metabolism; propanoate degradation. The protein operates within carbohydrate metabolism; tricarboxylic acid cycle; isocitrate from oxaloacetate: step 1/2. Involved in the catabolism of short chain fatty acids (SCFA) via the tricarboxylic acid (TCA)(acetyl degradation route) and via the 2-methylcitrate cycle I (propionate degradation route). Catalyzes the Claisen condensation of propionyl-CoA and oxaloacetate (OAA) to yield 2-methylcitrate (2-MC) and CoA. Also catalyzes the condensation of oxaloacetate with acetyl-CoA but with a lower specificity. This is 2-methylcitrate synthase (gltA) from Antarctic bacterium DS2-3R.